A 122-amino-acid chain; its full sequence is Ribonuclease P protein component (122 aa).

This sequence belongs to the RnpA family. Consists of a catalytic RNA component (M1 or rnpB) and a protein subunit.

It catalyses the reaction Endonucleolytic cleavage of RNA, removing 5'-extranucleotides from tRNA precursor.. RNaseP catalyzes the removal of the 5'-leader sequence from pre-tRNA to produce the mature 5'-terminus. It can also cleave other RNA substrates such as 4.5S RNA. The protein component plays an auxiliary but essential role in vivo by binding to the 5'-leader sequence and broadening the substrate specificity of the ribozyme. This is Ribonuclease P protein component from Lactobacillus gasseri (strain ATCC 33323 / DSM 20243 / BCRC 14619 / CIP 102991 / JCM 1131 / KCTC 3163 / NCIMB 11718 / NCTC 13722 / AM63).